Reading from the N-terminus, the 545-residue chain is Chaperonin GroEL (545 aa).

ATP contacts are provided by residues 30–33, K51, 87–91, G416, 479–481, and D495; these read TMGP, DGTTT, and NAA.

The protein belongs to the chaperonin (HSP60) family. Forms a cylinder of 14 subunits composed of two heptameric rings stacked back-to-back. Interacts with the co-chaperonin GroES.

The protein localises to the cytoplasm. The catalysed reaction is ATP + H2O + a folded polypeptide = ADP + phosphate + an unfolded polypeptide.. In terms of biological role, together with its co-chaperonin GroES, plays an essential role in assisting protein folding. The GroEL-GroES system forms a nano-cage that allows encapsulation of the non-native substrate proteins and provides a physical environment optimized to promote and accelerate protein folding. This Nautilia profundicola (strain ATCC BAA-1463 / DSM 18972 / AmH) protein is Chaperonin GroEL.